Consider the following 82-residue polypeptide: ATP synthase subunit c (82 aa).

Helical transmembrane passes span 7–27 and 57–77; these read AASV…PGIG and LAFM…LLFA.

Belongs to the ATPase C chain family. In terms of assembly, F-type ATPases have 2 components, F(1) - the catalytic core - and F(0) - the membrane proton channel. F(1) has five subunits: alpha(3), beta(3), gamma(1), delta(1), epsilon(1). F(0) has four main subunits: a(1), b(1), b'(1) and c(10-14). The alpha and beta chains form an alternating ring which encloses part of the gamma chain. F(1) is attached to F(0) by a central stalk formed by the gamma and epsilon chains, while a peripheral stalk is formed by the delta, b and b' chains.

Its subcellular location is the cellular thylakoid membrane. F(1)F(0) ATP synthase produces ATP from ADP in the presence of a proton or sodium gradient. F-type ATPases consist of two structural domains, F(1) containing the extramembraneous catalytic core and F(0) containing the membrane proton channel, linked together by a central stalk and a peripheral stalk. During catalysis, ATP synthesis in the catalytic domain of F(1) is coupled via a rotary mechanism of the central stalk subunits to proton translocation. Functionally, key component of the F(0) channel; it plays a direct role in translocation across the membrane. A homomeric c-ring of between 10-14 subunits forms the central stalk rotor element with the F(1) delta and epsilon subunits. The chain is ATP synthase subunit c from Synechococcus sp. (strain RCC307).